Reading from the N-terminus, the 385-residue chain is Aldehyde dehydrogenase family 3 member B2 (385 aa).

Residue 107–112 (GSPRVG) coordinates NAD(+). Catalysis depends on residues Glu-129 and Cys-163. Cys-382 is modified (cysteine methyl ester). Cys-382 carries the S-geranylgeranyl cysteine lipid modification. Residues 383–385 (TLL) constitute a propeptide, removed in mature form.

Belongs to the aldehyde dehydrogenase family. Post-translationally, geranylgeranylation is important for localization to lipid droplets and enzyme activity. Salivary gland. Expressed at protein level in placenta.

The protein localises to the lipid droplet. It carries out the reaction an aldehyde + NAD(+) + H2O = a carboxylate + NADH + 2 H(+). The enzyme catalyses a long-chain fatty aldehyde + NAD(+) + H2O = a long-chain fatty acid + NADH + 2 H(+). The catalysed reaction is a medium-chain fatty aldehyde + NAD(+) + H2O = a medium-chain fatty acid + NADH + 2 H(+). It catalyses the reaction hexadecanoate + NADH + 2 H(+) = hexadecanal + NAD(+) + H2O. It carries out the reaction octanal + NAD(+) + H2O = octanoate + NADH + 2 H(+). The protein operates within alcohol metabolism; ethanol degradation; acetate from ethanol: step 2/2. Oxidizes medium and long chain fatty aldehydes in lipid droplets into non-toxic fatty acids. This chain is Aldehyde dehydrogenase family 3 member B2 (ALDH3B2), found in Homo sapiens (Human).